Here is a 409-residue protein sequence, read N- to C-terminus: Protein naked cuticle homolog 2 (409 aa).

The N-myristoyl glycine moiety is linked to residue Gly-2. Residues 109–144 (AEDNRQEWVFTLYDFDNSGKVTKEDMSSLMHTIYDV) enclose the EF-hand domain. Residues Asp-122, Asp-124, Ser-126, Lys-128, and Asp-133 each coordinate Ca(2+). 4 disordered regions span residues 160–224 (LRVK…YCVD), 243–315 (TSRF…RYPG), 346–366 (SHTH…RIRS), and 388–409 (RHEH…YHQT). 2 stretches are compositionally biased toward basic and acidic residues: residues 171 to 185 (AARR…RETS) and 193 to 224 (VRSE…YCVD). A compositionally biased stretch (low complexity) spans 247–268 (DSSSPDADQDPPSRSSHSQSRP). The segment covering 389 to 409 (HEHHHHHEHHHHHHYHHYHQT) has biased composition (basic residues).

It belongs to the NKD family. In terms of tissue distribution, expressed ubiquitously until 1 dpf, when expression becomes confined to the anterior CNS, with slight expression in the developing tail.

The protein localises to the cell membrane. It localises to the cytoplasm. Functionally, cell autonomous antagonist of both the canonical and non-canonical Wnt signaling pathways. This is Protein naked cuticle homolog 2 (nkd2) from Danio rerio (Zebrafish).